Consider the following 724-residue polypeptide: Degenerin mec-10 (724 aa).

Residues methionine 1–arginine 15 show a composition bias toward polar residues. Residues methionine 1 to aspartate 22 are disordered. At methionine 1–alanine 122 the chain is on the cytoplasmic side. Residues alanine 123–isoleucine 143 form a helical membrane-spanning segment. Residues glutamine 144–glycine 684 lie on the Extracellular side of the membrane. Residues lysine 229–serine 265 are disordered. A compositionally biased stretch (acidic residues) spans glutamate 246 to glutamate 255. Residues cysteine 256–serine 265 are compositionally biased toward basic and acidic residues. 5 N-linked (GlcNAc...) asparagine glycosylation sites follow: asparagine 293, asparagine 369, asparagine 463, asparagine 605, and asparagine 624. The chain crosses the membrane as a helical span at residues valine 685–isoleucine 705. The Cytoplasmic portion of the chain corresponds to alanine 706 to tyrosine 724.

Belongs to the amiloride-sensitive sodium channel (TC 1.A.6) family. In terms of assembly, component of a non-voltage-gated amiloride-sensitive cation channel complex (also called the degenerin channel complex) composed of at least the mec-2, mec-4, mec-6 and mec-10 subunits; the complex mediates mechanotransduction in touch cells. Interacts with mec-4 and mec-6.

The protein resides in the cell membrane. In terms of biological role, subunit of an amiloride-sensitive cation channel (degenerin channel complex) permeable for sodium, potassium, lithium and N-methylglucamine, and required for mechanosensory transduction (touch sensitivity). Negatively regulates the turning step of male mating behavior. The protein is Degenerin mec-10 of Caenorhabditis elegans.